The primary structure comprises 146 residues: Hemoglobin subunit beta-1 (146 aa).

Ser1 is subject to N-acetylserine. A Globin domain is found at 2-146; sequence FLSAEEKGLV…VASALAHRYH (145 aa). At Lys17 the chain carries N6-succinyllysine. A phosphoserine mark is found at Ser44 and Ser50. An N6-succinyllysine modification is found at Lys59. Heme b-binding residues include His63 and His92. Arg104 is modified (asymmetric dimethylarginine).

Belongs to the globin family. Heterotetramer of two alpha chains and two beta chains. In terms of tissue distribution, red blood cells.

In terms of biological role, involved in oxygen transport from the lung to the various peripheral tissues. The sequence is that of Hemoglobin subunit beta-1 (HBB1) from Panthera leo (Lion).